A 172-amino-acid polypeptide reads, in one-letter code: 3-hydroxydecanoyl-[acyl-carrier-protein] dehydratase (172 aa).

His71 is a catalytic residue.

This sequence belongs to the thioester dehydratase family. FabA subfamily. In terms of assembly, homodimer.

The protein resides in the cytoplasm. The enzyme catalyses a (3R)-hydroxyacyl-[ACP] = a (2E)-enoyl-[ACP] + H2O. It catalyses the reaction (3R)-hydroxydecanoyl-[ACP] = (2E)-decenoyl-[ACP] + H2O. The catalysed reaction is (2E)-decenoyl-[ACP] = (3Z)-decenoyl-[ACP]. It functions in the pathway lipid metabolism; fatty acid biosynthesis. Functionally, necessary for the introduction of cis unsaturation into fatty acids. Catalyzes the dehydration of (3R)-3-hydroxydecanoyl-ACP to E-(2)-decenoyl-ACP and then its isomerization to Z-(3)-decenoyl-ACP. Can catalyze the dehydratase reaction for beta-hydroxyacyl-ACPs with saturated chain lengths up to 16:0, being most active on intermediate chain length. The protein is 3-hydroxydecanoyl-[acyl-carrier-protein] dehydratase of Vibrio vulnificus (strain CMCP6).